The chain runs to 458 residues: MAAQGATAAVAATTSGTVGEGEPGPGENAAVEGPARSPGRVSPPTPARGEPEVTVEIGETYLCRRPDSTWHSAEVIQSRVNDQEGREEFYVHYVGFNRRLDEWVDKNRLALTKTVKDAVQKNSEKYLSELAEQPERKITRNQKRKHDEINHVQKTYAEMDPTTAALEKEHEAITKVKYVDKIHIGNYEIDAWYFSPFPEDYGKQPKLWLCEYCLKYMKFEKSYRFHLGQCQWRQPPGKEIYRKSNISVYEVDGKDHKIYCQNLCLLAKLFLDHKTLYFDVEPFVFYILTEVDRQGAHIVGYFSKEKESPDGNNVACILTLPPYQRRGYGKFLIAFSYELSKLESTVGSPEKPLSDLGKLSYRSYWSWVLLEILRDFRGTLSIKDLSQMTSITQNDIISTLQSLNMVKYWKGQHVICVTPKLVEEHLKSAQYKKPPITVDSVCLKWAPPKHKQVKLSKK.

2 stretches are compositionally biased toward low complexity: residues Met-1 to Thr-17 and Pro-25 to Ala-35. The interval Met-1–Glu-52 is disordered. Residue Ala-2 is modified to N-acetylalanine. Phosphoserine is present on residues Ser-37 and Ser-42. The Tudor-knot domain occupies Val-55–Ala-110. Lys-113 is modified (N6-acetyllysine). The Nuclear localization signal signature appears at Arg-140 to Ile-149. An MYST-type HAT domain is found at Thr-174–Pro-447. The tract at residues Thr-174 to Lys-458 is sufficient for interaction with KANSL1. Residues Leu-207–Trp-232 form a C2HC MYST-type zinc finger. Residues Cys-210, Cys-213, His-226, and Cys-230 each contribute to the Zn(2+) site. At Lys-274 the chain carries N6-acetyllysine. Residues Ile-317, Thr-319, Arg-325, Arg-326, Gly-327, Gly-329, and Lys-330 each contribute to the acetyl-CoA site. Ser-348 is modified (phosphoserine). Glu-350 acts as the Proton donor/acceptor in catalysis. Positions 354, 363, 408, and 432 each coordinate acetyl-CoA.

The protein belongs to the MYST (SAS/MOZ) family. Component of a multisubunit histone acetyltransferase complex (MSL) at least composed of the MOF/KAT8, MSL1/hampin, MSL2L1 and MSL3L1. Component of the NSL complex at least composed of MOF/KAT8, KANSL1, KANSL2, KANSL3, MCRS1, PHF20, OGT1/OGT, WDR5 and HCFC1. Component of some MLL1/MLL complex, at least composed of the core components KMT2A/MLL1, ASH2L, HCFC1, WDR5 and RBBP5, as well as the facultative components BACC1, CHD8, E2F6, HSP70, INO80C, KANSL1, LAS1L, MAX, MCRS1, MGA, MOF/KAT8, PELP1, PHF20, PRP31, RING2, RUVB1/TIP49A, RUVB2/TIP49B, SENP3, TAF1, TAF4, TAF6, TAF7, TAF9 and TEX10. Interacts with the chromodomain of MORF4L1/MRG15. Interacts with ATM (via its Tudor-knot domain); possibly regulating the activity of ATM. Interacts with NELFD. In terms of processing, acetylation at Lys-274 facilitates cognate substrate Lys-binding and acetylation. Although considered as an autoacetylation event, acetylation at Lys-274 probably takes place via a non-enzymatic process following acetyl-CoA-binding, which primes KAT8 for cognate protein-lysine acetylation. During oocyte development, expressed in both oocytes and granulosa cells.

The protein localises to the nucleus. The protein resides in the chromosome. It localises to the mitochondrion. It carries out the reaction L-lysyl-[histone] + acetyl-CoA = N(6)-acetyl-L-lysyl-[histone] + CoA + H(+). It catalyses the reaction L-lysyl-[protein] + acetyl-CoA = N(6)-acetyl-L-lysyl-[protein] + CoA + H(+). The enzyme catalyses propanoyl-CoA + L-lysyl-[protein] = N(6)-propanoyl-L-lysyl-[protein] + CoA + H(+). Its activity is regulated as follows. The acetyltransferase activity is inhibited by anacardic acid derivatives. Functionally, histone acetyltransferase that catalyzes histone H4 acetylation at 'Lys-5'- and 'Lys-8' (H4K5ac and H4K8ac) or 'Lys-16' (H4K16ac), depending on the context. Catalytic component of the MSL histone acetyltransferase complex, a multiprotein complex that mediates the majority of histone H4 acetylation at 'Lys-16' (H4K16ac), an epigenetic mark that prevents chromatin compaction. H4K16ac constitutes the only acetylation mark intergenerationally transmitted and regulates key biological processes, such as oogenesis, embryonic stem cell pluripotency, hematopoiesis or glucose metabolism. The MSL complex is required for chromosome stability and genome integrity by maintaining homeostatic levels of H4K16ac. The MSL complex is also involved in gene dosage by promoting up-regulation of genes expressed by the X chromosome. X up-regulation is required to compensate for autosomal biallelic expression. The MSL complex also participates in gene dosage compensation by promoting expression of Tsix non-coding RNA. As part of the NSL histone acetyltransferase complex, catalyzes histone H4 acetylation at 'Lys-5'- and 'Lys-8' (H4K5ac and H4K8ac) at transcription start sites and promotes transcription initiation. The NSL complex also acts as a regulator of gene expression in mitochondria: KAT8 associates with mitochondrial DNA and controls expression of respiratory genes in an acetyltransferase-dependent mechanism. Also functions as an acetyltransferase for non-histone targets, such as ALKBH5, COX17, IRF3, KDM1A/LSD1, LMNA, PAX7 or TP53/p53. Acts as an inhibitor of antiviral immunity by acetylating IRF3, preventing IRF3 recruitment to promoters. Acts as a regulator of asymmetric division in muscle stem cells by mediating acetylation of PAX7. As part of the NSL complex, acetylates TP53/p53 at 'Lys-120'. Acts as a regulator of epithelial-to-mesenchymal transition as part of the NSL complex by mediating acetylation of KDM1A/LSD1. The NSL complex is required for nuclear architecture maintenance by mediating acetylation of LMNA. Promotes mitochondrial integrity by catalyzing acetylation of COX17. In addition to protein acetyltransferase activity, able to mediate protein propionylation. This Mus musculus (Mouse) protein is Histone acetyltransferase KAT8.